A 1194-amino-acid polypeptide reads, in one-letter code: ATP-dependent RNA helicase DHX30 (1194 aa).

Basic and acidic residues predominate over residues 1 to 10; it reads MFSLDSFRKD. The segment at 1–27 is disordered; that stretch reads MFSLDSFRKDRAQHRQRQCKLPPPRLP. A phosphoserine mark is found at Ser-6 and Arg-15. In terms of domain architecture, DRBM spans 53 to 121; that stretch reads PKNLLNSVIG…QAAAAACQLF (69 aa). The tract at residues 150-199 is disordered; that stretch reads ADSWWRPEPTMPPTSWRQLNPESIRPGGPGGLSRSLGREEEEDEEEELEE. Residues 188–199 are compositionally biased toward acidic residues; sequence EEEEDEEEELEE. Phosphoserine occurs at positions 226 and 380. Residues 444–612 form the Helicase ATP-binding domain; it reads LNAIEQHPVV…FGGCPVIKVP (169 aa). 457–464 provides a ligand contact to ATP; that stretch reads GDTGCGKT. Residues 559 to 562 carry the DEAH box motif; it reads DEVH. In terms of domain architecture, Helicase C-terminal spans 654–827; the sequence is LVTDLVLHID…NLVLQAKIHM (174 aa).

It belongs to the DEAD box helicase family. DEAH subfamily. Identified in a complex with TFAM and SSBP1. Interacts with AGO1 and AGO2. Interacts (via N-terminus) with ZC3HAV1 (via N-terminal domain) in an RNA-independent manner. Found in a complex with GRSF1, DDX28, FASTKD2 and FASTKD5. Phosphorylated on Ser-15.

It localises to the cytoplasm. Its subcellular location is the mitochondrion. It is found in the mitochondrion matrix. The protein resides in the mitochondrion nucleoid. It carries out the reaction ATP + H2O = ADP + phosphate + H(+). Its function is as follows. RNA-dependent helicase. Plays an important role in the assembly of the mitochondrial large ribosomal subunit. Required for optimal function of the zinc-finger antiviral protein ZC3HAV1. Associates with mitochondrial DNA. Involved in nervous system development and differentiation through its involvement in the up-regulation of a number of genes which are required for neurogenesis, including GSC, NCAM1, neurogenin, and NEUROD. In Homo sapiens (Human), this protein is ATP-dependent RNA helicase DHX30 (DHX30).